Reading from the N-terminus, the 805-residue chain is Leucine--tRNA ligase (805 aa).

The short motif at 40–51 (PYPSGAGLHVGH) is the 'HIGH' region element. The 'KMSKS' region signature appears at 576–580 (KMSKS). Lysine 579 lines the ATP pocket.

Belongs to the class-I aminoacyl-tRNA synthetase family.

The protein resides in the cytoplasm. It carries out the reaction tRNA(Leu) + L-leucine + ATP = L-leucyl-tRNA(Leu) + AMP + diphosphate. This Brevibacillus brevis (strain 47 / JCM 6285 / NBRC 100599) protein is Leucine--tRNA ligase.